A 317-amino-acid polypeptide reads, in one-letter code: tRNA dimethylallyltransferase (317 aa).

19-26 contacts ATP; sequence GPTASGKS. Residue 21 to 26 coordinates substrate; that stretch reads TASGKS. Positions 44 to 47 are interaction with substrate tRNA; the sequence is DSMQ.

Belongs to the IPP transferase family. Monomer. The cofactor is Mg(2+).

The catalysed reaction is adenosine(37) in tRNA + dimethylallyl diphosphate = N(6)-dimethylallyladenosine(37) in tRNA + diphosphate. Functionally, catalyzes the transfer of a dimethylallyl group onto the adenine at position 37 in tRNAs that read codons beginning with uridine, leading to the formation of N6-(dimethylallyl)adenosine (i(6)A). The polypeptide is tRNA dimethylallyltransferase (Methylorubrum extorquens (strain CM4 / NCIMB 13688) (Methylobacterium extorquens)).